Here is a 406-residue protein sequence, read N- to C-terminus: Multifunctional CCA protein (406 aa).

ATP is bound by residues glycine 8 and arginine 11. Glycine 8 and arginine 11 together coordinate CTP. Aspartate 21 and aspartate 23 together coordinate Mg(2+). 3 residues coordinate ATP: arginine 91, arginine 138, and arginine 141. CTP contacts are provided by arginine 91, arginine 138, and arginine 141. An HD domain is found at 229–331 (TGIHQEMVSD…LELLGRCDAL (103 aa)).

It belongs to the tRNA nucleotidyltransferase/poly(A) polymerase family. Bacterial CCA-adding enzyme type 1 subfamily. As to quaternary structure, monomer. Can also form homodimers and oligomers. Mg(2+) is required as a cofactor. Requires Ni(2+) as cofactor.

The catalysed reaction is a tRNA precursor + 2 CTP + ATP = a tRNA with a 3' CCA end + 3 diphosphate. It catalyses the reaction a tRNA with a 3' CCA end + 2 CTP + ATP = a tRNA with a 3' CCACCA end + 3 diphosphate. Functionally, catalyzes the addition and repair of the essential 3'-terminal CCA sequence in tRNAs without using a nucleic acid template. Adds these three nucleotides in the order of C, C, and A to the tRNA nucleotide-73, using CTP and ATP as substrates and producing inorganic pyrophosphate. tRNA 3'-terminal CCA addition is required both for tRNA processing and repair. Also involved in tRNA surveillance by mediating tandem CCA addition to generate a CCACCA at the 3' terminus of unstable tRNAs. While stable tRNAs receive only 3'-terminal CCA, unstable tRNAs are marked with CCACCA and rapidly degraded. The sequence is that of Multifunctional CCA protein from Stenotrophomonas maltophilia (strain K279a).